The sequence spans 492 residues: N-succinylglutamate 5-semialdehyde dehydrogenase (492 aa).

An NAD(+)-binding site is contributed by glycine 220–glycine 225. Residues glutamate 243 and cysteine 277 contribute to the active site.

The protein belongs to the aldehyde dehydrogenase family. AstD subfamily.

The enzyme catalyses N-succinyl-L-glutamate 5-semialdehyde + NAD(+) + H2O = N-succinyl-L-glutamate + NADH + 2 H(+). It participates in amino-acid degradation; L-arginine degradation via AST pathway; L-glutamate and succinate from L-arginine: step 4/5. Functionally, catalyzes the NAD-dependent reduction of succinylglutamate semialdehyde into succinylglutamate. In Salmonella typhimurium (strain LT2 / SGSC1412 / ATCC 700720), this protein is N-succinylglutamate 5-semialdehyde dehydrogenase.